Consider the following 269-residue polypeptide: Shikimate dehydrogenase (NADP(+)) (269 aa).

Residues 17-19 and Thr-64 contribute to the shikimate site; that span reads SKS. Catalysis depends on Lys-68, which acts as the Proton acceptor. Glu-80 contributes to the NADP(+) binding site. Positions 89 and 105 each coordinate shikimate. Residues 130–134, 154–159, and Met-213 contribute to the NADP(+) site; these read GAGGA and NRTHAK. A shikimate-binding site is contributed by Tyr-215. Position 237 (Gly-237) interacts with NADP(+).

This sequence belongs to the shikimate dehydrogenase family. As to quaternary structure, homodimer.

The enzyme catalyses shikimate + NADP(+) = 3-dehydroshikimate + NADPH + H(+). It functions in the pathway metabolic intermediate biosynthesis; chorismate biosynthesis; chorismate from D-erythrose 4-phosphate and phosphoenolpyruvate: step 4/7. Functionally, involved in the biosynthesis of the chorismate, which leads to the biosynthesis of aromatic amino acids. Catalyzes the reversible NADPH linked reduction of 3-dehydroshikimate (DHSA) to yield shikimate (SA). The polypeptide is Shikimate dehydrogenase (NADP(+)) (Neisseria pharyngis).